The following is a 795-amino-acid chain: Phenylalanine--tRNA ligase beta subunit (795 aa).

One can recognise a tRNA-binding domain in the interval Ala39 to Arg148. A B5 domain is found at Pro401 to Asn476. Positions 454, 460, 463, and 464 each coordinate Mg(2+). The 94-residue stretch at Ser701–Arg794 folds into the FDX-ACB domain.

The protein belongs to the phenylalanyl-tRNA synthetase beta subunit family. Type 1 subfamily. As to quaternary structure, tetramer of two alpha and two beta subunits. Mg(2+) serves as cofactor.

It localises to the cytoplasm. The catalysed reaction is tRNA(Phe) + L-phenylalanine + ATP = L-phenylalanyl-tRNA(Phe) + AMP + diphosphate + H(+). The polypeptide is Phenylalanine--tRNA ligase beta subunit (Pseudoalteromonas translucida (strain TAC 125)).